The sequence spans 367 residues: Peptide chain release factor 2 (367 aa).

N5-methylglutamine is present on Q249.

This sequence belongs to the prokaryotic/mitochondrial release factor family. Methylated by PrmC. Methylation increases the termination efficiency of RF2.

It is found in the cytoplasm. Its function is as follows. Peptide chain release factor 2 directs the termination of translation in response to the peptide chain termination codons UGA and UAA. The chain is Peptide chain release factor 2 from Pseudothermotoga lettingae (strain ATCC BAA-301 / DSM 14385 / NBRC 107922 / TMO) (Thermotoga lettingae).